The sequence spans 52 residues: uncharacterized protein (52 aa).

This is an uncharacterized protein from Dictyostelium discoideum (Social amoeba).